A 311-amino-acid chain; its full sequence is Bifunctional protein FolD (311 aa).

NADP(+) is bound at residue 174-176; it reads GKG.

Belongs to the tetrahydrofolate dehydrogenase/cyclohydrolase family. In terms of assembly, homodimer.

The enzyme catalyses (6R)-5,10-methylene-5,6,7,8-tetrahydrofolate + NADP(+) = (6R)-5,10-methenyltetrahydrofolate + NADPH. The catalysed reaction is (6R)-5,10-methenyltetrahydrofolate + H2O = (6R)-10-formyltetrahydrofolate + H(+). The protein operates within one-carbon metabolism; tetrahydrofolate interconversion. Its function is as follows. Catalyzes the oxidation of 5,10-methylenetetrahydrofolate to 5,10-methenyltetrahydrofolate and then the hydrolysis of 5,10-methenyltetrahydrofolate to 10-formyltetrahydrofolate. The protein is Bifunctional protein FolD of Pyrobaculum islandicum (strain DSM 4184 / JCM 9189 / GEO3).